We begin with the raw amino-acid sequence, 132 residues long: Small ribosomal subunit protein uS8 (132 aa).

The protein belongs to the universal ribosomal protein uS8 family. In terms of assembly, part of the 30S ribosomal subunit. Contacts proteins S5 and S12.

One of the primary rRNA binding proteins, it binds directly to 16S rRNA central domain where it helps coordinate assembly of the platform of the 30S subunit. The polypeptide is Small ribosomal subunit protein uS8 (Xanthomonas oryzae pv. oryzae (strain MAFF 311018)).